The primary structure comprises 271 residues: MYYAVSQARVNAVPGTMLRPQRPGDLQLGASLYELVGYRQPPSSSSSSTSSTSSTSSSSTTAPLLPKAAREKPEAPAEPPGPGPGSGAHPGGSARPDAKEEQQQQLRRKINSRERKRMQDLNLAMDALREVILPYSAAHCQGAPGRKLSKIATLLLARNYILLLGSSLQELRRALGEGAGPAAPRLLLAGLPLLAAAPGSVLLAPGAVGPPDALRPAKYLSLALDEPPCGQFALPGGGAGGPGLCTCAVCKFPHLVPASLGLAAVQAQFSK.

A disordered region spans residues 38–117; sequence YRQPPSSSSS…RKINSRERKR (80 aa). A compositionally biased stretch (low complexity) spans 43 to 61; it reads SSSSSSTSSTSSTSSSSTT. The bHLH domain occupies 105–164; that stretch reads QLRRKINSRERKRMQDLNLAMDALREVILPYSAAHCQGAPGRKLSKIATLLLARNYILLL.

Expressed in the brain, in oligodendrocytes. Strongly expressed in oligodendrogliomas, while expression is weak to moderate in astrocytomas. Expression in glioblastomas is highly variable.

It is found in the nucleus. Functionally, promotes formation and maturation of oligodendrocytes, especially within the brain. Cooperates with OLIG2 to establish the pMN domain of the embryonic neural tube. This chain is Oligodendrocyte transcription factor 1 (OLIG1), found in Homo sapiens (Human).